Reading from the N-terminus, the 1088-residue chain is MTTAQRDSLLWKLAGLLRESGDVVLSGCSTLSLLTPTLQQLNHVFELHLGPWGPGQTGFVALPSHPADSPVILQLQFLFDVLQKTLSLKLVHVAGPGPTGPIKIFPFKSLRHLELRGVPLHCLHGLRGIYSQLETLICSRSLQALEELLSACGGDFCSALPWLALLSANFSYNALTALDSSLRLLSALRFLNLSHNQVQDCQGFLMDLCELHHLDISYNRLHLVPRMGPSGAALGVLILRGNELRSLHGLEQLRNLRHLDLAYNLLEGHRELSPLWLLAELRKLYLEGNPLWFHPEHRAATAQYLSPRARDAATGFLLDGKVLSLTDFQTHTSLGLSPMGPPLPWPVGSTPETSGGPDLSDSLSSGGVVTQPLLHKVKSRVRVRRASISEPSDTDPEPRTLNPSPAGWFVQQHPELELMSSFRERFGRNWLQYRSHLEPSGNPLPATPTTSAPSAPPASSQGPDTAPRPSPPQEEARGPQESPQKMSEEVRAEPQEEEEEKEGKEEKEEGEMVEQGEEEAGEEEEEEQDQKEVEAELCRPLLVCPLEGPEGVRGRECFLRVTSAHLFEVELQAARTLERLELQSLEAAEIEPEAQAQRSPRPTGSDLLPGAPILSLRFSYICPDRQLRRYLVLEPDAHAAVQELLAVLTPVTNVAREQLGEARDLLLGRFQCLRCGHEFKPEEPRMGLDSEEGWRPLFQKTESPAVCPNCGSDHVVLLAVSRGTPNRERKQGEQSLAPSPSASPVCHPPGHGDHLDRAKNSPPQAPSTRDHGSWSLSPPPERCGLRSVDHRLRLFLDVEVFSDAQEEFQCCLKVPVALAGHTGEFMCLVVVSDRRLYLLKVTGEMREPPASWLQLTLAVPLQDLSGIELGLAGQSLRLEWAAGAGRCVLLPRDARHCRAFLEELLDVLQSLPPAWRNCVSATEEEVTPQHRLWPLLEKDSSLEARQFFYLRAFLVEGPSTCLVSLLLTPSTLFLLDEDAAGSPAEPSPPAASGEASEKVPPSGPGPAVRVREQQPLSSLSSVLLYRSAPEDLRLLFYDEVSRLESFWALRVVCQEQLTALLAWIREPWEELFSIGLRTVIQEALALDR.

LRR repeat units follow at residues 109–130 (SLRH…RGIY), 132–152 (QLET…LSAC), 164–185 (ALLS…LRLL), 187–209 (ALRF…MDLC), 210–231 (ELHH…GPSG), 233–254 (ALGV…EQLR), 255–276 (NLRH…SPLW), and 280–301 (ELRK…RAAT). Disordered regions lie at residues 335 to 407 (GLSP…SPAG) and 437 to 533 (LEPS…QKEV). Residues 346-367 (PVGSTPETSGGPDLSDSLSSGG) are compositionally biased toward low complexity. Residues 375 to 385 (HKVKSRVRVRR) are compositionally biased toward basic residues. Phosphoserine occurs at positions 387, 389, and 392. Residues 447–460 (TPTTSAPSAPPASS) show a composition bias toward low complexity. At Ser470 the chain carries Phosphoserine. The segment covering 508 to 529 (EEGEMVEQGEEEAGEEEEEEQD) has biased composition (acidic residues). Ser599 is subject to Phosphoserine. Disordered regions lie at residues 724 to 780 (TPNR…SPPP) and 978 to 1009 (DAAG…PAVR). Polar residues predominate over residues 733 to 742 (EQSLAPSPSA). Residues 750–759 (GHGDHLDRAK) are compositionally biased toward basic and acidic residues. 3 positions are modified to phosphoserine: Ser761, Ser773, and Ser777. The span at 978 to 994 (DAAGSPAEPSPPAASGE) shows a compositional bias: low complexity.

Belongs to the STK11IP family. As to quaternary structure, found in a ternary complex composed of STK11/LKB1, STK11IP and SMAD4. Interacts with STK11/LKB1 and SMAD4.

The protein localises to the cytoplasm. Its function is as follows. May regulate STK11/LKB1 function by controlling its subcellular localization. This chain is Serine/threonine-protein kinase 11-interacting protein (STK11IP), found in Homo sapiens (Human).